We begin with the raw amino-acid sequence, 574 residues long: Eukaryotic translation initiation factor 3 subunit D (574 aa).

The segment at Gln-153–Arg-178 is disordered. The segment covering Arg-154–Gln-163 has biased composition (low complexity). An RNA gate region spans residues Pro-312–Pro-326. Residues Glu-555–Gln-574 form a disordered region. Acidic residues predominate over residues Ser-564–Gln-574.

It belongs to the eIF-3 subunit D family. As to quaternary structure, component of the eukaryotic translation initiation factor 3 (eIF-3) complex.

It localises to the cytoplasm. In terms of biological role, mRNA cap-binding component of the eukaryotic translation initiation factor 3 (eIF-3) complex, which is involved in protein synthesis of a specialized repertoire of mRNAs and, together with other initiation factors, stimulates binding of mRNA and methionyl-tRNAi to the 40S ribosome. The eIF-3 complex specifically targets and initiates translation of a subset of mRNAs involved in cell proliferation. In the eIF-3 complex, eif3d specifically recognizes and binds the 7-methylguanosine cap of a subset of mRNAs. This is Eukaryotic translation initiation factor 3 subunit D from Caenorhabditis briggsae.